The following is a 414-amino-acid chain: Lipoyl synthase, mitochondrial (414 aa).

Residues 1–18 constitute a mitochondrion transit peptide; the sequence is MYRRSVGVLFVGRNTRWI. Positions 51–67 are enriched in polar residues; that stretch reads GNSTEVENATSQLTGTS. Residues 51 to 75 are disordered; sequence GNSTEVENATSQLTGTSGKRRKGNR. 7 residues coordinate [4Fe-4S] cluster: cysteine 150, cysteine 155, cysteine 161, cysteine 181, cysteine 185, cysteine 188, and serine 396. The Radical SAM core domain maps to 164–385; that stretch reads GKDKSKATAT…KERALEMGFL (222 aa).

The protein belongs to the radical SAM superfamily. Lipoyl synthase family. Requires [4Fe-4S] cluster as cofactor.

The protein resides in the mitochondrion. The catalysed reaction is [[Fe-S] cluster scaffold protein carrying a second [4Fe-4S](2+) cluster] + N(6)-octanoyl-L-lysyl-[protein] + 2 oxidized [2Fe-2S]-[ferredoxin] + 2 S-adenosyl-L-methionine + 4 H(+) = [[Fe-S] cluster scaffold protein] + N(6)-[(R)-dihydrolipoyl]-L-lysyl-[protein] + 4 Fe(3+) + 2 hydrogen sulfide + 2 5'-deoxyadenosine + 2 L-methionine + 2 reduced [2Fe-2S]-[ferredoxin]. The protein operates within protein modification; protein lipoylation via endogenous pathway; protein N(6)-(lipoyl)lysine from octanoyl-[acyl-carrier-protein]: step 2/2. In terms of biological role, catalyzes the radical-mediated insertion of two sulfur atoms into the C-6 and C-8 positions of the octanoyl moiety bound to the lipoyl domains of lipoate-dependent enzymes, thereby converting the octanoylated domains into lipoylated derivatives. This Saccharomyces cerevisiae (strain RM11-1a) (Baker's yeast) protein is Lipoyl synthase, mitochondrial.